A 57-amino-acid chain; its full sequence is U13-myrmicitoxin-Mri1a (57 aa).

A signal peptide spans 1–23; it reads MKIIHVLLLVAVVAITMSPSIMA. Residues 24 to 29 constitute a propeptide that is removed on maturation; the sequence is ESVAEA. The residue at position 56 (glutamate 56) is a Glutamic acid 1-amide.

As to expression, expressed by the venom gland.

The protein localises to the secreted. Functionally, induces paralysis 1 hour after injection into insects (blowfly L.caesar) but does not appear to be lethal. This is U13-myrmicitoxin-Mri1a from Manica rubida (European giant red ant).